A 306-amino-acid polypeptide reads, in one-letter code: Large ribosomal subunit protein mL45 (306 aa).

It belongs to the mitochondrion-specific ribosomal protein mL45 family. As to quaternary structure, component of the mitochondrial ribosome large subunit (39S) which comprises a 16S rRNA and about 50 distinct proteins.

The protein localises to the mitochondrion. Functionally, component of the mitochondrial large ribosomal subunit (mt-LSU). Within the mitochondrial ribosomes, required to direct the nascent polypeptide toward the tunnel exit and position the exit at a distance from the membrane surface. In Bos taurus (Bovine), this protein is Large ribosomal subunit protein mL45 (MRPL45).